A 403-amino-acid chain; its full sequence is MLTPEQKAIVKATVPALEAHGETITRTFYASMFAAHPELLNIFNPANQQTGKQARSLAASVLAYAAHIDHPEALGGMVGRIAHKHVSLEVLPEHYPIVGQYLLGAIAGVLGDAAKPEILDAWAAAYGELADLMIGIEKGMYDAGAGQPGGWRDFRPFRVARKVAESRVITSFVLEPVGGGALPAYQPGQYLSLKVKVPGQERWQIRQYSLSDAPSPDHYRISVKREGGGLVSEYLHGAVQEGDELLVHVPAGDFVLQQSERPVVLISAGVGITPMLAMVQTLAQAGSQRPVTFIHAAQNGSVHAFRDDVARLTHEYPHFRKVVFYDEAGPDDQLGTHHDVAGRLSLDAVRGALPAGEAEFYYCGPAGFAGAVEAILDDLQVPAERRFTETFGPSQSFAPVILG.

The Globin domain occupies methionine 1–lysine 138. A heme b-binding site is contributed by histidine 85. Residues tyrosine 95 and glutamate 137 each act as charge relay system in the active site. Positions glycine 149–glycine 403 are reductase. The FAD-binding FR-type domain maps to arginine 152–glutamine 257. FAD is bound by residues tyrosine 190 and arginine 206 to serine 209. Glycine 269–proline 274 contacts NADP(+). Position 390–393 (threonine 390–proline 393) interacts with FAD.

The protein belongs to the globin family. Two-domain flavohemoproteins subfamily. This sequence in the C-terminal section; belongs to the flavoprotein pyridine nucleotide cytochrome reductase family. The cofactor is heme b. FAD serves as cofactor.

It catalyses the reaction 2 nitric oxide + NADPH + 2 O2 = 2 nitrate + NADP(+) + H(+). The catalysed reaction is 2 nitric oxide + NADH + 2 O2 = 2 nitrate + NAD(+) + H(+). This Deinococcus radiodurans (strain ATCC 13939 / DSM 20539 / JCM 16871 / CCUG 27074 / LMG 4051 / NBRC 15346 / NCIMB 9279 / VKM B-1422 / R1) protein is Flavohemoprotein.